Here is a 368-residue protein sequence, read N- to C-terminus: Apolipoprotein A-V (368 aa).

A signal peptide spans 1 to 20; it reads MAAVITWALALLAVFASTQA. Ser52 is modified (phosphoserine). Positions 231-255 form a coiled coil; the sequence is TRKAKDLHTSIQRNLDQLRDELSAF. The segment at 305–333 is disordered; it reads EEIQHQLAPPPPSHSAFAPELGHSDSNKA.

This sequence belongs to the apolipoprotein A1/A4/E family. In terms of assembly, interacts with GPIHBP1. Interacts with SORL1; this interaction leads to APOA5 internalization and sorting either to lysosomes and degradation, or to the trans-Golgi network. Phosphorylated by FAM20C in the extracellular medium. As to expression, liver.

It localises to the secreted. The protein resides in the early endosome. The protein localises to the late endosome. It is found in the golgi apparatus. Its subcellular location is the trans-Golgi network. Functionally, minor apolipoprotein mainly associated with HDL and to a lesser extent with VLDL. May also be associated with chylomicrons. Important determinant of plasma triglyceride (TG) levels by both being a potent stimulator of apo-CII lipoprotein lipase (LPL) TG hydrolysis and an inhibitor of the hepatic VLDL-TG production rate (without affecting the VLDL-apoB production rate). Activates poorly lecithin:cholesterol acyltransferase (LCAT) and does not enhance efflux of cholesterol from macrophages. Binds heparin. The protein is Apolipoprotein A-V (Apoa5) of Mus musculus (Mouse).